A 212-amino-acid polypeptide reads, in one-letter code: Cytidylate kinase (212 aa).

7 to 15 (GPAASGKGT) serves as a coordination point for ATP.

Belongs to the cytidylate kinase family. Type 1 subfamily.

It localises to the cytoplasm. It catalyses the reaction CMP + ATP = CDP + ADP. It carries out the reaction dCMP + ATP = dCDP + ADP. The sequence is that of Cytidylate kinase from Rhodopseudomonas palustris (strain HaA2).